A 252-amino-acid chain; its full sequence is Isoprenyl transferase (252 aa).

Aspartate 32 is a catalytic residue. Aspartate 32 contacts Mg(2+). Substrate-binding positions include glycine 33 to arginine 36, tryptophan 37, arginine 45, histidine 49, and serine 77 to glutamate 79. Asparagine 80 serves as the catalytic Proton acceptor. Substrate-binding positions include tryptophan 81, arginine 83, arginine 200, and arginine 206–serine 208. Residue glutamate 219 participates in Mg(2+) binding.

It belongs to the UPP synthase family. Homodimer. The cofactor is Mg(2+).

Functionally, catalyzes the condensation of isopentenyl diphosphate (IPP) with allylic pyrophosphates generating different type of terpenoids. The protein is Isoprenyl transferase of Listeria innocua serovar 6a (strain ATCC BAA-680 / CLIP 11262).